We begin with the raw amino-acid sequence, 570 residues long: Laccase-3 (570 aa).

Positions 1 to 25 (MESFRRFSLLSFIALLAYFAFLASA) are cleaved as a signal peptide. 2 consecutive Plastocyanin-like domains span residues 33 to 149 (VITP…PRLG) and 159 to 310 (RDIP…YVNA). N-linked (GlcNAc...) asparagine glycosylation is present at asparagine 79. Cu cation-binding residues include histidine 83, histidine 85, histidine 128, and histidine 130. Asparagine 188, asparagine 298, asparagine 332, asparagine 383, asparagine 393, and asparagine 433 each carry an N-linked (GlcNAc...) asparagine glycan. Positions 419–554 (DFPPVPPVQF…AMVFLVENGR (136 aa)) constitute a Plastocyanin-like 3 domain. Residues histidine 471, histidine 474, histidine 476, histidine 533, cysteine 534, histidine 535, and histidine 539 each contribute to the Cu cation site.

Belongs to the multicopper oxidase family. It depends on Cu cation as a cofactor. In terms of tissue distribution, mostly expressed in roots and siliques.

It is found in the secreted. It localises to the extracellular space. Its subcellular location is the apoplast. The catalysed reaction is 4 hydroquinone + O2 = 4 benzosemiquinone + 2 H2O. In terms of biological role, lignin degradation and detoxification of lignin-derived products. In Arabidopsis thaliana (Mouse-ear cress), this protein is Laccase-3 (LAC3).